A 473-amino-acid chain; its full sequence is MNLALVLGTNVVRKAYRFLFISRKFCNGNFGGNEIDNGFPDLDCGFDEDSNISELRSIDREVISVRSRFLESANHSASRVLVTLQLDESGFNSKSVLDELNVRVSGLLVREVLVGILRNLSYDNKARCAKLAYRFFLWSGEQECFRHTVNSYHLLMKIFAECGEYKAMWRLVDEMVQDGFPTTARTFNLLICSCGEAGLAKQAVVQFMKSKTFNYRPFKHSYNAILNSLLGVKQYKLIEWVYKQMLEDGFSPDVLTYNILLWTNYRLGKMDRFDRLFDEMARDGFSPDSYTYNILLHILGKGNKPLAALTTLNHMKEVGIDPSVLHYTTLIDGLSRAGNLEACKYFLDEMVKAGCRPDVVCYTVMITGYVVSGELDKAKEMFREMTVKGQLPNVFTYNSMIRGLCMAGEFREACWLLKEMESRGCNPNFVVYSTLVSYLRKAGKLSEARKVIREMVKKGHYVHLVPKMMKYRR.

9 PPR repeats span residues 148–182 (TVNSYHLLMKIFAECGEYKAMWRLVDEMVQDGFPT), 183–217 (TARTFNLLICSCGEAGLAKQAVVQFMKSKTFNYRP), 218–252 (FKHSYNAILNSLLGVKQYKLIEWVYKQMLEDGFSP), 253–287 (DVLTYNILLWTNYRLGKMDRFDRLFDEMARDGFSP), 288–322 (DSYTYNILLHILGKGNKPLAALTTLNHMKEVGIDP), 323–357 (SVLHYTTLIDGLSRAGNLEACKYFLDEMVKAGCRP), 358–392 (DVVCYTVMITGYVVSGELDKAKEMFREMTVKGQLP), 393–427 (NVFTYNSMIRGLCMAGEFREACWLLKEMESRGCNP), and 428–462 (NFVVYSTLVSYLRKAGKLSEARKVIREMVKKGHYV).

Belongs to the PPR family. P subfamily.

The sequence is that of Pentatricopeptide repeat-containing protein At3g60050 from Arabidopsis thaliana (Mouse-ear cress).